The primary structure comprises 547 residues: Chaperonin GroEL (547 aa).

Residues 30–33 (TLGP), K51, 87–91 (DGTTT), G415, 479–481 (NAA), and D495 each bind ATP. The tract at residues 525-547 (PKEDSPGAGAGMGGMGGMGGMDM) is disordered. The span at 532-547 (AGAGMGGMGGMGGMDM) shows a compositional bias: gly residues.

It belongs to the chaperonin (HSP60) family. In terms of assembly, forms a cylinder of 14 subunits composed of two heptameric rings stacked back-to-back. Interacts with the co-chaperonin GroES.

Its subcellular location is the cytoplasm. It catalyses the reaction ATP + H2O + a folded polypeptide = ADP + phosphate + an unfolded polypeptide.. Together with its co-chaperonin GroES, plays an essential role in assisting protein folding. The GroEL-GroES system forms a nano-cage that allows encapsulation of the non-native substrate proteins and provides a physical environment optimized to promote and accelerate protein folding. This Nitrosomonas europaea (strain ATCC 19718 / CIP 103999 / KCTC 2705 / NBRC 14298) protein is Chaperonin GroEL.